The following is a 1116-amino-acid chain: Cation channel sperm-associated auxiliary subunit beta (1116 aa).

Topologically, residues 1–1053 (MESPLIYVSV…QIYVDEAPLP (1053 aa)) are extracellular. A disulfide bond links C35 and C60. N-linked (GlcNAc...) asparagine glycosylation is found at N90, N100, N118, N226, and N321. An intrachain disulfide couples C189 to C302. A disulfide bond links C330 and C343. 2 N-linked (GlcNAc...) asparagine glycosylation sites follow: N618 and N690. 4 cysteine pairs are disulfide-bonded: C718/C816, C829/C1037, C911/C920, and C922/C937. Residues N913 and N921 are each glycosylated (N-linked (GlcNAc...) asparagine). 2 N-linked (GlcNAc...) asparagine glycosylation sites follow: N1010 and N1015. Residues 1054 to 1076 (FPGHTLIAVATAVVLGGLIFIAF) traverse the membrane as a helical segment. The Cytoplasmic segment spans residues 1077–1116 (MFQLQGIHPWRTFQRWIRRNQEKFSSISLSELIHRSKSEE).

As to quaternary structure, component of the CatSper complex or CatSpermasome composed of the core pore-forming members CATSPER1, CATSPER2, CATSPER3 and CATSPER4 as well as auxiliary members CATSPERB, CATSPERG, CATSPERD, CATSPERE, CATSPERZ, C2CD6/CATSPERT, TMEM249, TMEM262 and EFCAB9. HSPA1 may be an additional auxiliary complex member. The core complex members CATSPER1, CATSPER2, CATSPER3 and CATSPER4 form a heterotetrameric channel. The auxiliary CATSPERB, CATSPERG, CATSPERD and CATSPERE subunits form a pavilion-like structure over the pore which stabilizes the complex through interactions with CATSPER4, CATSPER3, CATSPER1 and CATSPER2 respectively. TMEM262/CATSPERH interacts with CATSPERB, further stabilizing the complex. C2CD6/CATSPERT interacts at least with CATSPERD and is required for targeting the CatSper complex in the flagellar membrane.

It localises to the cell projection. It is found in the cilium. Its subcellular location is the flagellum membrane. Auxiliary component of the CatSper complex, a complex involved in sperm cell hyperactivation. Sperm cell hyperactivation is needed for sperm motility which is essential late in the preparation of sperm for fertilization. This is Cation channel sperm-associated auxiliary subunit beta from Homo sapiens (Human).